The sequence spans 244 residues: Phosphoadenosine 5'-phosphosulfate reductase (244 aa).

Cysteine 239 (nucleophile; cysteine thiosulfonate intermediate) is an active-site residue.

This sequence belongs to the PAPS reductase family. CysH subfamily.

It localises to the cytoplasm. The enzyme catalyses [thioredoxin]-disulfide + sulfite + adenosine 3',5'-bisphosphate + 2 H(+) = [thioredoxin]-dithiol + 3'-phosphoadenylyl sulfate. It functions in the pathway sulfur metabolism; hydrogen sulfide biosynthesis; sulfite from sulfate: step 3/3. Its function is as follows. Catalyzes the formation of sulfite from phosphoadenosine 5'-phosphosulfate (PAPS) using thioredoxin as an electron donor. The protein is Phosphoadenosine 5'-phosphosulfate reductase of Pectobacterium carotovorum subsp. carotovorum (strain PC1).